The chain runs to 402 residues: 2,3-bisphosphoglycerate-independent phosphoglycerate mutase 2 (402 aa).

It belongs to the BPG-independent phosphoglycerate mutase family. A-PGAM subfamily.

The enzyme catalyses (2R)-2-phosphoglycerate = (2R)-3-phosphoglycerate. Its pathway is carbohydrate degradation; glycolysis; pyruvate from D-glyceraldehyde 3-phosphate: step 3/5. Functionally, catalyzes the interconversion of 2-phosphoglycerate and 3-phosphoglycerate. This chain is 2,3-bisphosphoglycerate-independent phosphoglycerate mutase 2 (apgM2), found in Methanothermobacter thermautotrophicus (strain ATCC 29096 / DSM 1053 / JCM 10044 / NBRC 100330 / Delta H) (Methanobacterium thermoautotrophicum).